Here is a 210-residue protein sequence, read N- to C-terminus: Protein-L-isoaspartate O-methyltransferase (210 aa).

Ser52 is an active-site residue.

Belongs to the methyltransferase superfamily. L-isoaspartyl/D-aspartyl protein methyltransferase family.

The protein localises to the cytoplasm. The enzyme catalyses [protein]-L-isoaspartate + S-adenosyl-L-methionine = [protein]-L-isoaspartate alpha-methyl ester + S-adenosyl-L-homocysteine. Functionally, catalyzes the methyl esterification of L-isoaspartyl residues in peptides and proteins that result from spontaneous decomposition of normal L-aspartyl and L-asparaginyl residues. It plays a role in the repair and/or degradation of damaged proteins. The polypeptide is Protein-L-isoaspartate O-methyltransferase (Protochlamydia amoebophila (strain UWE25)).